Reading from the N-terminus, the 228-residue chain is MLVVIPQVLNAEQVGAVRERLEHAGEAWVDGRVTAGYSGAPVKFNQQIDERSDVALECQRLILGMLERNPRFISAALPNIVYPPMFNRYSEGMTFGAHVDGSVRIHPHDGRKLRTDISATLFLSPHDSYDGGELQVQDTYGMHSVKLDAGDMVVYPATSLHQVTPITRGTRVASFFWIQSLIRDDTQRSLLFDMDNAIQRLNQTGADEEARRTLVGCYHNLLRQWSET.

The Fe2OG dioxygenase domain occupies I80–S180. The Fe cation site is built by H98, D100, and H161. Residue R171 coordinates 2-oxoglutarate.

Fe(2+) is required as a cofactor. It depends on L-ascorbate as a cofactor.

This chain is PKHD-type hydroxylase Reut_A2877, found in Cupriavidus pinatubonensis (strain JMP 134 / LMG 1197) (Cupriavidus necator (strain JMP 134)).